Consider the following 208-residue polypeptide: MTNVLFIKANGLPAERSVSVALYEIFLTEYKKSHPDDNVTELDLFEADLPYYDVTMMSGLHKEAAGETLSPEEKRLADIANSYLDQFLAADKIVMAFPLWNFSIPAQFLTYLFYLNQAGKTFKYTANGPVGLVADKKIALLNARGGIYSDGPMQSFEMSLSYVKNVLAHFGISEPEMVIVEGHNAKPDQAKDIISAGAKEAVELAKIF.

Residue 17-19 (SVS) participates in FMN binding.

Belongs to the azoreductase type 1 family. Homodimer. Requires FMN as cofactor.

The enzyme catalyses 2 a quinone + NADH + H(+) = 2 a 1,4-benzosemiquinone + NAD(+). The catalysed reaction is N,N-dimethyl-1,4-phenylenediamine + anthranilate + 2 NAD(+) = 2-(4-dimethylaminophenyl)diazenylbenzoate + 2 NADH + 2 H(+). Functionally, quinone reductase that provides resistance to thiol-specific stress caused by electrophilic quinones. In terms of biological role, also exhibits azoreductase activity. Catalyzes the reductive cleavage of the azo bond in aromatic azo compounds to the corresponding amines. The chain is FMN-dependent NADH:quinone oxidoreductase 1 from Listeria monocytogenes serotype 4b (strain F2365).